A 577-amino-acid chain; its full sequence is Moesin (577 aa).

The FERM domain occupies 2–295; sequence PKTINVRVTT…GNHELYMRRR (294 aa). Phosphoserine is present on Ser74. Position 79 is an N6-acetyllysine (Lys79). Lys83 carries the post-translational modification N6-succinyllysine. The short motif at 115–120 is the [IL]-x-C-x-x-[DE] motif element; it reads IYCPPE. Residue Tyr116 is modified to Phosphotyrosine. Cys117 bears the S-nitrosocysteine mark. Lys139 and Lys165 each carry N6-acetyllysine. Over residues 375-401 the composition is skewed to basic and acidic residues; the sequence is LEQERKRAQSEAEKLAKERQEAEEAKE. 2 disordered regions span residues 375–409 and 466–518; these read LEQE…ASQD and AMST…NERV. At Ser407 the chain carries Phosphoserine. The span at 476 to 487 shows a compositional bias: acidic residues; sequence AENEQDEQDENG. Residues 492–518 show a composition bias toward basic and acidic residues; it reads AELRADAMAKDRSEEERTTEAEKNERV. Ser527 is modified (phosphoserine). Thr558 bears the Phosphothreonine; by ROCK2 and STK10 mark.

In resting T-cells, part of a PAG1-NHERF1-MSN complex which is disrupted upon TCR activation. Interacts with NHERF1. Interacts with PPP1R16B. Interacts with PDZD8. Interacts with SELPLG and SYK; these interactions mediate the activation of SYK by SELPLG. Interacts with PDPN (via cytoplasmic domain); this interaction activates RHOA and promotes epithelial-mesenchymal transition. Interacts with SPN/CD43 cytoplasmic tail. Interacts with CD44. Interacts with ICAM2. Interacts with ICAM3 (via C-terminus). Interacts with PDZD8. Interacts with F-actin. Interacts with CD46. Interacts with PTPN6. Phosphorylation on Thr-558 is crucial for the formation of microvilli-like structures. Phosphorylation by ROCK2 suppresses the head-to-tail association of the N-terminal and C-terminal halves resulting in an opened conformation which is capable of actin and membrane-binding. Phosphorylation on Thr-558 by STK10 negatively regulates lymphocyte migration and polarization. In terms of processing, S-nitrosylation of Cys-117 is induced by interferon-gamma and oxidatively-modified low-densitity lipoprotein (LDL(ox)) implicating the iNOS-S100A8/9 transnitrosylase complex.

The protein localises to the cell membrane. Its subcellular location is the cytoplasm. It localises to the cytoskeleton. The protein resides in the apical cell membrane. It is found in the cell projection. The protein localises to the microvillus membrane. Its subcellular location is the microvillus. Its activity is regulated as follows. A head-to-tail association, of the N-terminal and C-terminal halves results in a closed conformation (inactive form) which is incapable of actin or membrane-binding. Functionally, ezrin-radixin-moesin (ERM) family protein that connects the actin cytoskeleton to the plasma membrane and thereby regulates the structure and function of specific domains of the cell cortex. Tethers actin filaments by oscillating between a resting and an activated state providing transient interactions between moesin and the actin cytoskeleton. Once phosphorylated on its C-terminal threonine, moesin is activated leading to interaction with F-actin and cytoskeletal rearrangement. These rearrangements regulate many cellular processes, including cell shape determination, membrane transport, and signal transduction. The role of moesin is particularly important in immunity acting on both T and B-cells homeostasis and self-tolerance, regulating lymphocyte egress from lymphoid organs. Modulates phagolysosomal biogenesis in macrophages. Participates also in immunologic synapse formation. The protein is Moesin of Bos taurus (Bovine).